Here is a 456-residue protein sequence, read N- to C-terminus: G-protein coupled receptor 39 (456 aa).

Residues 1–34 lie on the Extracellular side of the membrane; the sequence is MASSSGSNHICSRVIDHSHVPEFEVATWIKITLI. 2 disulfides stabilise this stretch: Cys11–Cys191 and Cys108–Cys210. Zn(2+)-binding residues include His17 and His19. A helical transmembrane segment spans residues 35 to 55; the sequence is LVYLIIFVVGILGNSVTIRVT. The Cytoplasmic segment spans residues 56–69; that stretch reads QVLQKKGYLQKEVT. Residues 70-89 traverse the membrane as a helical segment; the sequence is DHMVSLACSDILVFLIGMPM. At 90-109 the chain is on the extracellular side; sequence EFYSIIWNPLTTPSYALSCK. Residues 110-131 traverse the membrane as a helical segment; that stretch reads LHTFLFETCSYATLLHVLTLSF. Residues 132-151 lie on the Cytoplasmic side of the membrane; the sequence is ERYIAICHPFKYKAVSGPRQ. The helical transmembrane segment at 152-172 threads the bilayer; the sequence is VKLLIGFVWVTSALVALPLLF. Over 173-217 the chain is Extracellular; it reads AMGIEYPLVNVPTHKGLNCNLSRTRHHDEPGNSNMSICTNLSNRW. Residues Asn192 and Asn206 are each glycosylated (N-linked (GlcNAc...) asparagine). The helical transmembrane segment at 218–242 threads the bilayer; that stretch reads EVFQSSIFGAFAVYLVVLASVAFMC. Residues 243 to 283 are Cytoplasmic-facing; it reads WNMMKVLMKSKQGTLAGTGPQLQLRKSESEESRTARRQTII. A helical membrane pass occupies residues 284–305; it reads FLRLIVVTLAVCWMPNQIRRIM. Residues 306–323 lie on the Extracellular side of the membrane; that stretch reads AAAKPKHDWTRTYFRAYM. A helical transmembrane segment spans residues 324-344; it reads ILLPFSDTFFYLSSVVNPLLY. Residues 345-456 are Cytoplasmic-facing; sequence NVSSQQFRKV…TENSLQEQEV (112 aa). Ser397 is modified (phosphoserine). The tract at residues 415–456 is disordered; that stretch reads FQTEAKPGEAKPQPLSPESPQTGSETKPAGSTTENSLQEQEV. The segment covering 430 to 456 has biased composition (polar residues); sequence SPESPQTGSETKPAGSTTENSLQEQEV.

It belongs to the G-protein coupled receptor 1 family. As to quaternary structure, interacts with HTR1A. Interacts with GALR1. As to expression, expression is detected in septumamygdala, parietal cells, enterocytes, neurons and pancreas, in peripheral organs such as the duodenum and kidney but not in the pituitary and hypothalamus.

It localises to the cell membrane. Its function is as follows. Zinc-sensing receptor that can sense changes in extracellular Zn(2+), mediate Zn(2+) signal transmission, and participates in the regulation of numerous physiological processes including glucose homeostasis regulation, gastrointestinal mobility, hormone secretion and cell death. Activation by Zn(2+) in keratinocytes increases the intracellular concentration of Ca(2+) and activates the ERK/MAPK and PI3K/AKT signaling pathways leading to epithelial repair. Plays an essential role in normal wound healing by inducing the production of cytokines including the major inflammatory cytokine IL6 via the PKC/MAPK/CEBPB pathway. Regulates adipose tissue metabolism, especially lipolysis, and regulates the function of lipases, such as hormone-sensitive lipase and adipose triglyceride lipase. Plays a role in the inhibition of cell death and protects against oxidative, endoplasmic reticulum and mitochondrial stress by inducing secretion of the cytoprotective pigment epithelium-derived growth factor (PEDF) and probably other protective transcripts in a GNA13/RHOA/SRE-dependent manner. Forms dynamic heteroreceptor complexes with HTR1A and GALR1 depending on cell type or specific physiological states, resulting in signaling diversity: HTR1A-GPR39 shows additive increase in signaling along the serum response element (SRE) and NF-kappa-B pathways while GALR1 acts as an antagonist blocking SRE. In Mus musculus (Mouse), this protein is G-protein coupled receptor 39 (Gpr39).